Here is a 316-residue protein sequence, read N- to C-terminus: TATA-box-binding protein (316 aa).

2 disordered regions span residues 1 to 21 and 104 to 135; these read MDQNNSLPPYAQGLASPQGAM and LTTAPLPGTTPLYPSPMTPMTPITPATPASES. 2 stretches are compositionally biased toward low complexity: residues 104 to 115 and 123 to 133; these read LTTAPLPGTTPL and MTPITPATPAS. 2 repeat units span residues 142–218 and 232–309. The DNA site is built by Asn144, Arg180, Lys195, Asn234, and Arg271.

It belongs to the TBP family. As to quaternary structure, binds DNA as monomer. Belongs to the TFIID complex together with the TBP-associated factors (TAFs). Part of a TFIID-containing RNA polymerase II pre-initiation complex that is composed of TBP and at least GTF2A1, GTF2A2, GTF2E1, GTF2E2, GTF2F1, GTF2H2, GTF2H3, GTF2H4, GTF2H5, GTF2B, TCEA1, ERCC2, ERCC3, TAF1, TAF2, TAF3, TAF4, TAF5, TAF6, TAF7, TAF8, TAF9, TAF10, TAF11, TAF12 and TAF13. Component of the transcription factor SL1/TIF-IB complex, composed of TBP and at least TAF1A, TAF1B, TAF1C and TAF1D. Association of TBP to form either TFIID or SL1/TIF-IB appears to be mutually exclusive. Interacts with TAF1A, TAF1B and TAF1C. Interacts with TFIIB, NCOA6, DRAP1, DR1 and ELF3. Interacts with SPIB, SNAPC1, SNAPC2 and SNAPC4. Interacts with UTF1. Interacts with BRF2; this interaction promotes recruitment of BRF2 to TATA box-containing promoters. Interacts with UBTF. Interacts with GPBP1. Interacts with CITED2. Interacts with ATF7IP. Interacts with LLPH. Interacts with HSF1 (via transactivation domain). Interacts with GTF2B (via C-terminus); this interaction with promoter-bound TBP guides RNA polymerase II into the pre-initiation complex (PIC). Interacts with PAX5. Interacts with MSX1; the interaction may inhibit MSX1 autoinactivation. Interacts with MSX3. Ubiquitously expressed.

It is found in the nucleus. Its function is as follows. General transcription factor that functions at the core of the DNA-binding multiprotein factor TFIID. Binding of TFIID to the TATA box is the initial transcriptional step of the pre-initiation complex (PIC), playing a role in the activation of eukaryotic genes transcribed by RNA polymerase II. Component of a BRF2-containing transcription factor complex that regulates transcription mediated by RNA polymerase III. Component of the transcription factor SL1/TIF-IB complex, which is involved in the assembly of the PIC (pre-initiation complex) during RNA polymerase I-dependent transcription. The rate of PIC formation probably is primarily dependent on the rate of association of SL1 with the rDNA promoter. SL1 is involved in stabilization of nucleolar transcription factor 1/UBTF on rDNA. The polypeptide is TATA-box-binding protein (Tbp) (Mus musculus (Mouse)).